A 129-amino-acid chain; its full sequence is Small ribosomal subunit protein uS11 (129 aa).

The protein belongs to the universal ribosomal protein uS11 family. In terms of assembly, part of the 30S ribosomal subunit. Interacts with proteins S7 and S18. Binds to IF-3.

Located on the platform of the 30S subunit, it bridges several disparate RNA helices of the 16S rRNA. Forms part of the Shine-Dalgarno cleft in the 70S ribosome. This Dechloromonas aromatica (strain RCB) protein is Small ribosomal subunit protein uS11.